A 145-amino-acid chain; its full sequence is Maximins 3/H3 type 2 (145 aa).

Positions 1 to 18 (MNFKYIVAVSFLIASAYA) are cleaved as a signal peptide. Propeptides lie at residues 19–43 (RSVQ…LREI) and 74–124 (RTAE…KEKR). Ile144 is subject to Isoleucine amide.

It belongs to the bombinin family. Expressed by the skin glands.

It localises to the secreted. Functionally, maximin-3 shows antibacterial activity against both Gram-positive and Gram-negative bacteria. It also shows antimicrobial activity against the fungus C.albicans, but not against A.flavus nor P.uticale. It has little hemolytic activity. It possess a significant cytotoxicity against tumor cell lines. It possess a significant anti-HIV activity. It shows high spermicidal activity. Maximin-H3 shows antibacterial activity against both Gram-positive and Gram-negative bacteria. It also shows antimicrobial activity against the fungus C.albicans. Shows strong hemolytic activity. The protein is Maximins 3/H3 type 2 of Bombina maxima (Giant fire-bellied toad).